Reading from the N-terminus, the 480-residue chain is Aspartyl/glutamyl-tRNA(Asn/Gln) amidotransferase subunit B (480 aa).

This sequence belongs to the GatB/GatE family. GatB subfamily. As to quaternary structure, heterotrimer of A, B and C subunits.

It carries out the reaction L-glutamyl-tRNA(Gln) + L-glutamine + ATP + H2O = L-glutaminyl-tRNA(Gln) + L-glutamate + ADP + phosphate + H(+). The catalysed reaction is L-aspartyl-tRNA(Asn) + L-glutamine + ATP + H2O = L-asparaginyl-tRNA(Asn) + L-glutamate + ADP + phosphate + 2 H(+). Allows the formation of correctly charged Asn-tRNA(Asn) or Gln-tRNA(Gln) through the transamidation of misacylated Asp-tRNA(Asn) or Glu-tRNA(Gln) in organisms which lack either or both of asparaginyl-tRNA or glutaminyl-tRNA synthetases. The reaction takes place in the presence of glutamine and ATP through an activated phospho-Asp-tRNA(Asn) or phospho-Glu-tRNA(Gln). This Streptococcus pneumoniae (strain P1031) protein is Aspartyl/glutamyl-tRNA(Asn/Gln) amidotransferase subunit B.